Consider the following 346-residue polypeptide: Putative F-box/kelch-repeat protein At1g27420 (346 aa).

One can recognise an F-box domain in the interval 9–56 (PIIPGLTDDVAELCVSKIPRSSFQITSQVCRRWRSFLRSQHFAAVRKL). Kelch repeat units lie at residues 62–109 (EFLC…VLDG), 111–167 (KIVF…EVNG), 168–215 (LLYV…AFSS), 217–257 (LYAV…VRNK), and 259–300 (YFMD…VWNN).

This is Putative F-box/kelch-repeat protein At1g27420 from Arabidopsis thaliana (Mouse-ear cress).